Reading from the N-terminus, the 370-residue chain is L-selectin (370 aa).

A signal peptide spans 1–28 (MLCPWKCQNAQRGLWNVFKLWVWIMLCC). A propeptide spanning residues 29-38 (DFFAHHGTDC) is cleaved from the precursor. At 39–333 (WTYHYSKRPM…SINEESDYNP (295 aa)) the chain is on the extracellular side. A C-type lectin domain is found at 55 to 155 (AFCRENYTDL…ACHKAKTALC (101 aa)). 10 disulfide bridges follow: Cys57/Cys155, Cys128/Cys147, Cys128/Cys160, Cys160/Cys171, Cys165/Cys180, Cys182/Cys191, Cys197/Cys241, Cys227/Cys254, Cys259/Cys303, and Cys289/Cys316. Residues Asn60, Asn77, and Asn104 are each glycosylated (N-linked (GlcNAc...) asparagine). Glu118, Asn120, Glu126, Asn143, and Asp144 together coordinate Ca(2+). One can recognise an EGF-like domain in the interval 156–192 (YTASCKPWSCSGHGQCVEVINNYTCNCDLGYYGPECQ). An N-linked (GlcNAc...) asparagine glycan is attached at Asn177. 2 consecutive Sushi domains span residues 195 to 256 (TQCV…TCRV) and 257 to 318 (IQCE…RCQK). N-linked (GlcNAc...) asparagine glycans are attached at residues Asn216, Asn226, and Asn246. Asn308 and Asn320 each carry an N-linked (GlcNAc...) asparagine glycan. A helical transmembrane segment spans residues 334–354 (LFIPVAVMVTAFSGLAFIIWL). Residues 355–370 (ARRLKRKSKKVSEKHG) lie on the Cytoplasmic side of the membrane.

Belongs to the selectin/LECAM family. Interaction with SELPLG/PSGL1 and PODXL2 is required for promoting recruitment and rolling of leukocytes. This interaction is dependent on the sialyl Lewis X glycan modification of SELPLG and PODXL2, and tyrosine sulfation modifications of SELPLG. Sulfation on 'Tyr-51' of SELPLG is important for L-selectin binding. In terms of processing, N-glycosylated. Highly expressed in lymphocytes from peripheral lymph nodes. Low in lymphocytes isolated from Peyer patches.

The protein resides in the cell membrane. Functionally, calcium-dependent lectin that mediates cell adhesion by binding to glycoproteins on neighboring cells. Mediates the adherence of lymphocytes to endothelial cells of high endothelial venules in peripheral lymph nodes. Promotes initial tethering and rolling of leukocytes in endothelia. The protein is L-selectin (SELL) of Bos taurus (Bovine).